The following is a 39-amino-acid chain: U1-ectatotoxin-Et1b subunit A (39 aa).

C14 and C35 are disulfide-bonded.

The protein belongs to the ectatomin family. Ectatomin-Et subfamily. Heterodimer of subunits A and B; disulfide-linked. In terms of tissue distribution, expressed by the venom gland.

It is found in the secreted. Its subcellular location is the target cell membrane. The protein is U1-ectatotoxin-Et1b subunit A of Ectatomma tuberculatum (Selva ant).